The following is an 834-amino-acid chain: Taste receptor type 1 member 2 (834 aa).

Residues 1-19 (MEPRVRTVCFLFFLLRVLA) form the signal peptide. The Extracellular segment spans residues 20–561 (EPAKNSDFYL…SFLEWHEAAT (542 aa)). Asn-84, Asn-292, Asn-312, Asn-363, Asn-423, Asn-482, and Asn-522 each carry an N-linked (GlcNAc...) asparagine glycan. The helical transmembrane segment at 562–582 (IAVALLAALGFLSTLAILVIF) threads the bilayer. Over 583–597 (WRHFETPMVRSAGGP) the chain is Cytoplasmic. Residues 598–618 (MCFLMLTLLLVAYMVVPVYVG) traverse the membrane as a helical segment. Topologically, residues 619 to 630 (LPKVSTCLCRQA) are extracellular. The chain crosses the membrane as a helical span at residues 631 to 651 (LFPVCFTICISCIAVRSFQIV). Over 652-676 (CVFKMASRFPRAYSYWVRYQGSYVS) the chain is Cytoplasmic. Residues 677 to 697 (VAFITALKMVTVVISLLATGL) form a helical membrane-spanning segment. Topologically, residues 698–722 (NPTTRTDTDDPKIMIISCNPNYRNS) are extracellular. Residues 723–743 (LLFNTSLDLLLSVAGFSFAYM) form a helical membrane-spanning segment. At 744 to 755 (GKELPTNYNEAK) the chain is on the cytoplasmic side. Residues 756–776 (FITFSMTFYFTSSVSLCTFMS) form a helical membrane-spanning segment. The Extracellular segment spans residues 777-779 (VYD). Residues 780-800 (GVLVTIVDLLVTVFNLLAISL) traverse the membrane as a helical segment. Topologically, residues 801 to 834 (GYFGPKCYMILFYPERNTPAYFNSMIQGYTMRRD) are cytoplasmic.

This sequence belongs to the G-protein coupled receptor 3 family. TAS1R subfamily. In terms of assembly, forms heterodimers with TAS1R3.

It is found in the cell membrane. Its function is as follows. Putative taste receptor. TAS1R2/TAS1R3 recognizes diverse natural and synthetic sweeteners. The sequence is that of Taste receptor type 1 member 2 (TAS1R2) from Saimiri sciureus (Common squirrel monkey).